The chain runs to 452 residues: Pup--protein ligase (452 aa).

Residue Glu9 coordinates Mg(2+). Arg53 contributes to the ATP binding site. Residue Tyr55 coordinates Mg(2+). The active-site Proton acceptor is the Asp57. Residue Glu63 coordinates Mg(2+). ATP contacts are provided by Thr66 and Trp419.

It belongs to the Pup ligase/Pup deamidase family. Pup-conjugating enzyme subfamily.

It catalyses the reaction ATP + [prokaryotic ubiquitin-like protein]-L-glutamate + [protein]-L-lysine = ADP + phosphate + N(6)-([prokaryotic ubiquitin-like protein]-gamma-L-glutamyl)-[protein]-L-lysine.. Its pathway is protein degradation; proteasomal Pup-dependent pathway. It participates in protein modification; protein pupylation. Its function is as follows. Catalyzes the covalent attachment of the prokaryotic ubiquitin-like protein modifier Pup to the proteasomal substrate proteins, thereby targeting them for proteasomal degradation. This tagging system is termed pupylation. The ligation reaction involves the side-chain carboxylate of the C-terminal glutamate of Pup and the side-chain amino group of a substrate lysine. The polypeptide is Pup--protein ligase (Mycolicibacterium gilvum (strain PYR-GCK) (Mycobacterium gilvum (strain PYR-GCK))).